The sequence spans 473 residues: Maltose fermentation regulatory protein MAL13 (473 aa).

Positions 13–39 (CDCCRIRRVKCDGKRPCSSCLQNSLDC) form a DNA-binding region, zn(2)-C6 fungal-type. Positions 46–54 (RKRGPKSIR) match the Nuclear localization signal motif.

Belongs to the MAL13 family.

Its subcellular location is the nucleus. In terms of biological role, regulates the coordinate transcription of structural MAL1S (maltase) and AGT1 (maltose permease) genes. The chain is Maltose fermentation regulatory protein MAL13 (MAL13) from Saccharomyces cerevisiae (strain ATCC 204508 / S288c) (Baker's yeast).